The primary structure comprises 261 residues: MTHQTHACHMVNPSPWPLTGALSGLLMTSGLIMWFHFNSTTLLMLGLTTNMLTMYQWWRDVIRESTFQGHHTPNVQKGLRYGMILFIISEVLFFTGFFWAFYHSSLAPTPELGGCWPPTGIHPLNPLEVPLLNTSVLLASGVSITWAHHSLMEGNRNHMLQALFITIALGVYFTLLQASEYYEAPFTISDGVYGSTFFVATGFHGLHVIIGSTFLIVCFFRQLKFHFTSSHHFGFEAAAWYWHFVDVVWLFLYVSIYWWGS.

The Mitochondrial matrix portion of the chain corresponds to 1-15 (MTHQTHACHMVNPSP). Residues 16–34 (WPLTGALSGLLMTSGLIMW) traverse the membrane as a helical segment. The Mitochondrial intermembrane segment spans residues 35-40 (FHFNST). Residues 41–66 (TLLMLGLTTNMLTMYQWWRDVIREST) form a helical membrane-spanning segment. Over 67–72 (FQGHHT) the chain is Mitochondrial matrix. Residues 73–105 (PNVQKGLRYGMILFIISEVLFFTGFFWAFYHSS) traverse the membrane as a helical segment. Over 106–128 (LAPTPELGGCWPPTGIHPLNPLE) the chain is Mitochondrial intermembrane. The chain crosses the membrane as a helical span at residues 129-152 (VPLLNTSVLLASGVSITWAHHSLM). Topologically, residues 153–155 (EGN) are mitochondrial matrix. The chain crosses the membrane as a helical span at residues 156-183 (RNHMLQALFITIALGVYFTLLQASEYYE). Over 184–190 (APFTISD) the chain is Mitochondrial intermembrane. A helical transmembrane segment spans residues 191–223 (GVYGSTFFVATGFHGLHVIIGSTFLIVCFFRQL). Residues 224–232 (KFHFTSSHH) are Mitochondrial matrix-facing. Residues 233–256 (FGFEAAAWYWHFVDVVWLFLYVSI) form a helical membrane-spanning segment. The Mitochondrial intermembrane portion of the chain corresponds to 257 to 261 (YWWGS).

The protein belongs to the cytochrome c oxidase subunit 3 family. Component of the cytochrome c oxidase (complex IV, CIV), a multisubunit enzyme composed of 14 subunits. The complex is composed of a catalytic core of 3 subunits MT-CO1, MT-CO2 and MT-CO3, encoded in the mitochondrial DNA, and 11 supernumerary subunits COX4I, COX5A, COX5B, COX6A, COX6B, COX6C, COX7A, COX7B, COX7C, COX8 and NDUFA4, which are encoded in the nuclear genome. The complex exists as a monomer or a dimer and forms supercomplexes (SCs) in the inner mitochondrial membrane with NADH-ubiquinone oxidoreductase (complex I, CI) and ubiquinol-cytochrome c oxidoreductase (cytochrome b-c1 complex, complex III, CIII), resulting in different assemblies (supercomplex SCI(1)III(2)IV(1) and megacomplex MCI(2)III(2)IV(2)).

The protein resides in the mitochondrion inner membrane. It carries out the reaction 4 Fe(II)-[cytochrome c] + O2 + 8 H(+)(in) = 4 Fe(III)-[cytochrome c] + 2 H2O + 4 H(+)(out). Functionally, component of the cytochrome c oxidase, the last enzyme in the mitochondrial electron transport chain which drives oxidative phosphorylation. The respiratory chain contains 3 multisubunit complexes succinate dehydrogenase (complex II, CII), ubiquinol-cytochrome c oxidoreductase (cytochrome b-c1 complex, complex III, CIII) and cytochrome c oxidase (complex IV, CIV), that cooperate to transfer electrons derived from NADH and succinate to molecular oxygen, creating an electrochemical gradient over the inner membrane that drives transmembrane transport and the ATP synthase. Cytochrome c oxidase is the component of the respiratory chain that catalyzes the reduction of oxygen to water. Electrons originating from reduced cytochrome c in the intermembrane space (IMS) are transferred via the dinuclear copper A center (CU(A)) of subunit 2 and heme A of subunit 1 to the active site in subunit 1, a binuclear center (BNC) formed by heme A3 and copper B (CU(B)). The BNC reduces molecular oxygen to 2 water molecules using 4 electrons from cytochrome c in the IMS and 4 protons from the mitochondrial matrix. This chain is Cytochrome c oxidase subunit 3 (MT-CO3), found in Gazella saudiya (Saudi gazelle).